A 508-amino-acid chain; its full sequence is Immunoglobulin G-binding protein A (508 aa).

The first 36 residues, 1–36 (MKKKNIYSIRKLGVGIASVTLGTLLISGGVTPAANA), serve as a signal peptide directing secretion. Positions 7-18 (YSIRKLGVGIAS) match the YSIRK-G/S signaling motif motif. The Immunoglobulin-binding region E repeat unit spans residues 37 to 92 (AQHDEAQQNAFYQVLNMPNLNADQRNGFIQSLKDDPSQSANVLGEAQKLNDSQAPK). Residues 93-153 (ADAQQNKFNK…KKLNESQAPK (61 aa)) form an Immunoglobulin-binding region D repeat. An Immunoglobulin-binding region A repeat occupies 154–211 (ADNNFNKEQQNAFYEILNMPNLNEEQRNGFIQSLKDDPSQSANLLAEAKKLNESQAPK). An Immunoglobulin-binding region B repeat occupies 212 to 269 (ADNKFNKEQQNAFYEILHLPNLNEEQRNGFIQSLKDDPSQSANLLAEAKKLNDAQAPK). Residues 270 to 327 (ADNKFNKEQQNAFYEILHLPNLTEEQRNGFIQSLKDDPSVSKEILAEAKKLNDAQAPK) form an Immunoglobulin-binding region C repeat. Positions 318–412 (KKLNDAQAPK…GNKPGKEDGN (95 aa)) are enriched in basic and acidic residues. Disordered stretches follow at residues 318 to 424 (KKLN…DTVN) and 459 to 479 (KKQP…ETGE). Tandem repeats lie at residues 333–340 (KPGKEDGN), 341–348 (KPGKEDGN), 349–356 (KPGKEDNK), 357–364 (KPGKEDGN), 365–372 (KPGKEDNK), 373–380 (KPGKEDGN), 381–388 (KPGKEDGN), 389–396 (KPGKEDGN), 397–405 (KPGKEDGNK), 406–413 (PGKEDGNG), 414–421 (VHVVKPGD), and 422–429 (TVNDIAKA). Residues 333–408 (KPGKEDGNKP…GKEDGNKPGK (76 aa)) are 12 X 8 AA approximate tandem repeats. The LysM domain maps to 413–457 (GVHVVKPGDTVNDIAKANGTTADKIAADNKLADKNMIKPGQELVV). Residues 474–478 (LPETG) carry the LPXTG sorting signal motif. T477 bears the Pentaglycyl murein peptidoglycan amidated threonine mark. The propeptide at 478–508 (GEENPFIGTTVFGGLSLALGAALLAGRRREL) is removed by sortase.

This sequence belongs to the immunoglobulin-binding protein SpA family. In terms of assembly, interacts with host TNFRSF1A; this interaction leads to the stimulation of both surface expression and shedding of TNFRSF1A.

Its subcellular location is the secreted. The protein localises to the cell wall. Plays a role in the inhibition of the host innate and adaptive immune responses. Possesses five immunoglobulin-binding domains that capture both the fragment crystallizable region (Fc region) and the Fab region (part of Ig that identifies antigen) of immunoglobulins. In turn, Staphylococcus aureus is protected from phagocytic killing via inhibition of Ig Fc region. In addition, the host elicited B-cell response is prevented due to a decrease of antibody-secreting cell proliferation that enter the bone marrow, thereby decreasing long-term antibody production. Inhibits osteogenesis by preventing osteoblast proliferation and expression of alkaline phosphatase, type I collagen, osteopontin and osteocalcin. Acts directly as a pro-inflammatory factor in the lung through its ability to bind and activate tumor necrosis factor alpha receptor 1/TNFRSF1A. In Staphylococcus aureus, this protein is Immunoglobulin G-binding protein A (spa).